Reading from the N-terminus, the 657-residue chain is MNAMLNIKEGEFTSTIYTLIHEHKFNDAIRILQYQHERNPKNLAALSLLGYCYYYTQDFQNAADCYSQLSYNYPHHSQYKLYHAQALYHAFKPAEALNVVTTIQDDDLLNESIKLEAAIKYQEDDLVNCRILVDQLPTDDATVLINTACIDYKEGNYSEALQKFNQATEFSGYQSGLAYSIALCYYRRGDYNSSLQLISEIINRGIKDHPEFHIGMVTEGFDVNVVQNSMTLHESALIEAFNLRFAIYYKTKDFKAAKECLTDMPPRHEHDYDPVTLHNLAINTANTDFGDSSAKLQFLLGSNPFPQETFANLLFLYCKNDYFGLAADVLAENPHQSFYCLNEYQFNLLEALIYMPTSPEESLKKLEKLDKECMTRLRKIAVEIQIKKEQKTSDKDDSLEMRNLIESYEDELELYLPVLMTHAKYYWDKRDYLAVEKLFRASNEYCNEHHTWKLNVAHTIFMQEKKYKEAALFYEPIVNRKYDGGILEIPAMVLANLVVCYIMTNQTDEAESILKTVENAEENALMSNPNEKYFHNSIISLVIGSLYCSKGNFEFGMSRVVKALEPPEKKLGVDTWYYAKRCIVAAIEMMAKNILVMRDSVVMEVIQFLSSCEIPGRNIYTVPDDLFEQAAESKVKCNVTYEARMLKAALLTVFHGS.

9 TPR repeats span residues 9–42 (EGEF…NPKN), 43–76 (LAAL…YPHH), 141–174 (ATVL…SGYQ), 175–208 (SGLA…GIKD), 238–271 (IEAF…HEHD), 384–417 (IQIK…LYLP), 418–449 (VLMT…CNEH), 451–484 (TWKL…KYDG), and 537–570 (SIIS…PEKK).

The protein belongs to the TTC30/dfy-1/fleer family.

It is found in the cell projection. The protein resides in the cilium. Its function is as follows. Required for polyglutamylation of axonemal tubulin. Plays a role in anterograde intraflagellar transport (IFT), the process by which cilia precursors are transported from the base of the cilium to the site of their incorporation at the tip. This protein is specifically required for the kinesin osm-3 to dock onto and move the IFT particles which contain these precursors. In Caenorhabditis briggsae, this protein is Tetratricopeptide repeat protein 30 homolog (dyf-1).